The primary structure comprises 185 residues: Translation initiation factor IF-3 (185 aa).

It belongs to the IF-3 family. As to quaternary structure, monomer.

Its subcellular location is the cytoplasm. In terms of biological role, IF-3 binds to the 30S ribosomal subunit and shifts the equilibrium between 70S ribosomes and their 50S and 30S subunits in favor of the free subunits, thus enhancing the availability of 30S subunits on which protein synthesis initiation begins. This is Translation initiation factor IF-3 from Coxiella burnetii (strain RSA 493 / Nine Mile phase I).